Here is a 1383-residue protein sequence, read N- to C-terminus: ATP-dependent RNA helicase TDRD9 (1383 aa).

Residues 35–82 (EAPREEVQRSEEVPNEDPTAQAQVPVKATAPARPASTSGRSLSQRSSE) form a disordered region. Residues 36 to 46 (APREEVQRSEE) are compositionally biased toward basic and acidic residues. The segment covering 70-80 (STSGRSLSQRS) has biased composition (low complexity). In terms of domain architecture, Helicase ATP-binding spans 144–310 (ISLIESNSVV…FAVPVQNKMN (167 aa)). Position 157 to 164 (157 to 164 (GATGSGKS)) interacts with ATP. The short motif at 256–259 (DEVH) is the DEAH box element. Residues 378–545 (SGAQFVSERS…ILKVKLLDMG (168 aa)) enclose the Helicase C-terminal domain. Positions 945 to 1005 (HPHPDLVCLA…REIPCQFLEL (61 aa)) constitute a Tudor domain.

Belongs to the DEAD box helicase family. DEAH subfamily. As to quaternary structure, interacts with piRNA-associated proteins PIWIL1 and PIWIL4. In terms of tissue distribution, predominantly expressed in reproductive organs. Detected in mitotic spermatogonia, meiotic spermatocytes (predominantly at the pachytene stage), haploid spermatids in the testis, and in growing oocytes in the ovary (at protein level).

The protein resides in the cytoplasm. Its subcellular location is the nucleus. The enzyme catalyses ATP + H2O = ADP + phosphate + H(+). ATP-binding RNA helicase which plays a central role during spermatogenesis by repressing transposable elements and preventing their mobilization, which is essential for the germline integrity. Acts via the piRNA metabolic process, which mediates the repression of transposable elements during meiosis by forming complexes composed of piRNAs and Piwi proteins and governs the methylation and subsequent repression of transposons. Acts downstream of piRNA biogenesis: exclusively required for transposon silencing in the nucleus, suggesting that it acts as a nuclear effector in the nucleus together with PIWIL4. The chain is ATP-dependent RNA helicase TDRD9 from Mus musculus (Mouse).